A 199-amino-acid chain; its full sequence is Pneumococcal vaccine antigen A homolog (199 aa).

The protein resides in the cell surface. The polypeptide is Pneumococcal vaccine antigen A homolog (pvaA) (Streptococcus pyogenes serotype M18 (strain MGAS8232)).